Here is a 454-residue protein sequence, read N- to C-terminus: Bifunctional protein GlmU (454 aa).

The tract at residues 1-228 (MSLKVIILAA…EMEVLGVNNK (228 aa)) is pyrophosphorylase. UDP-N-acetyl-alpha-D-glucosamine contacts are provided by residues 8–11 (LAAG), Lys-22, Gln-73, 78–79 (GT), 100–102 (YGD), Gly-138, Glu-153, Asn-168, and Asn-226. Asp-102 serves as a coordination point for Mg(2+). Asn-226 lines the Mg(2+) pocket. The tract at residues 229-249 (SQLQSLERQYQAQLAEELMEQ) is linker. The tract at residues 250–454 (GVTVLDASRI…IKGWQKPTKN (205 aa)) is N-acetyltransferase. UDP-N-acetyl-alpha-D-glucosamine contacts are provided by Arg-332 and Lys-350. Residue His-362 is the Proton acceptor of the active site. UDP-N-acetyl-alpha-D-glucosamine contacts are provided by Tyr-365 and Asn-376. Acetyl-CoA-binding positions include Ala-379, 385–386 (NY), Ser-404, Ala-422, and Arg-439.

In the N-terminal section; belongs to the N-acetylglucosamine-1-phosphate uridyltransferase family. This sequence in the C-terminal section; belongs to the transferase hexapeptide repeat family. Homotrimer. Requires Mg(2+) as cofactor.

Its subcellular location is the cytoplasm. The catalysed reaction is alpha-D-glucosamine 1-phosphate + acetyl-CoA = N-acetyl-alpha-D-glucosamine 1-phosphate + CoA + H(+). The enzyme catalyses N-acetyl-alpha-D-glucosamine 1-phosphate + UTP + H(+) = UDP-N-acetyl-alpha-D-glucosamine + diphosphate. Its pathway is nucleotide-sugar biosynthesis; UDP-N-acetyl-alpha-D-glucosamine biosynthesis; N-acetyl-alpha-D-glucosamine 1-phosphate from alpha-D-glucosamine 6-phosphate (route II): step 2/2. It participates in nucleotide-sugar biosynthesis; UDP-N-acetyl-alpha-D-glucosamine biosynthesis; UDP-N-acetyl-alpha-D-glucosamine from N-acetyl-alpha-D-glucosamine 1-phosphate: step 1/1. The protein operates within bacterial outer membrane biogenesis; LPS lipid A biosynthesis. Its function is as follows. Catalyzes the last two sequential reactions in the de novo biosynthetic pathway for UDP-N-acetylglucosamine (UDP-GlcNAc). The C-terminal domain catalyzes the transfer of acetyl group from acetyl coenzyme A to glucosamine-1-phosphate (GlcN-1-P) to produce N-acetylglucosamine-1-phosphate (GlcNAc-1-P), which is converted into UDP-GlcNAc by the transfer of uridine 5-monophosphate (from uridine 5-triphosphate), a reaction catalyzed by the N-terminal domain. The chain is Bifunctional protein GlmU from Hydrogenovibrio crunogenus (strain DSM 25203 / XCL-2) (Thiomicrospira crunogena).